The primary structure comprises 251 residues: Protein TK1472 (251 aa).

This sequence belongs to the CinA family.

The chain is Protein TK1472 from Thermococcus kodakarensis (strain ATCC BAA-918 / JCM 12380 / KOD1) (Pyrococcus kodakaraensis (strain KOD1)).